Consider the following 94-residue polypeptide: Large ribosomal subunit protein bL28 (94 aa).

The protein belongs to the bacterial ribosomal protein bL28 family.

The chain is Large ribosomal subunit protein bL28 from Maricaulis maris (strain MCS10) (Caulobacter maris).